The chain runs to 192 residues: Phosphomevalonate kinase (192 aa).

ATP contacts are provided by residues 17 to 23 (KRKSGKD) and R141. Position 170 (N170) interacts with substrate. Positions 171 and 180 each coordinate ATP.

In terms of assembly, monomer.

It localises to the cytoplasm. Its subcellular location is the cytosol. The enzyme catalyses (R)-5-phosphomevalonate + ATP = (R)-5-diphosphomevalonate + ADP. It functions in the pathway isoprenoid biosynthesis; isopentenyl diphosphate biosynthesis via mevalonate pathway; isopentenyl diphosphate from (R)-mevalonate: step 2/3. Functionally, catalyzes the reversible ATP-dependent phosphorylation of mevalonate 5-phosphate to produce mevalonate diphosphate and ADP, a key step in the mevalonic acid mediated biosynthesis of isopentenyl diphosphate and other polyisoprenoid metabolites. The protein is Phosphomevalonate kinase (Pmvk) of Mus musculus (Mouse).